The primary structure comprises 677 residues: Amine oxidase [copper-containing] alpha 2, peroxisomal (677 aa).

320 to 331 (YLDCGEFGCGQT) contacts substrate. Asp-322 functions as the Proton acceptor in the catalytic mechanism. Cys-341 and Cys-367 are joined by a disulfide. 407 to 412 (VGNYDY) provides a ligand contact to substrate. Tyr-410 functions as the Schiff-base intermediate with substrate; via topaquinone in the catalytic mechanism. Tyr-410 carries the post-translational modification 2',4',5'-topaquinone. Positions 466 and 468 each coordinate Cu cation. Mn(2+) contacts are provided by Asp-477, Asp-617, and Ile-618. Cu cation is bound at residue His-628.

Belongs to the copper/topaquinone oxidase family. As to quaternary structure, homodimer. It depends on Cu cation as a cofactor. The cofactor is Zn(2+). Requires L-topaquinone as cofactor. Topaquinone (TPQ) is generated by copper-dependent autoxidation of a specific tyrosyl residue. In terms of tissue distribution, expressed exclusively in leaves.

It localises to the peroxisome. It catalyses the reaction a primary methyl amine + O2 + H2O = an aldehyde + H2O2 + NH4(+). The protein operates within amine and polyamine degradation; putrescine degradation. Copper amine oxidase that can use putrescine and spermidine as substrates. Involved in putrescine catabolism in peroxisomes in response to salt stress. Regulates arginine-dependent nitric oxide (NO) production, a key signaling molecule regulating a wide range of physiological processes including responses to salt stress, by influencing arginine bioavailability. Modulates primary root growth. This Arabidopsis thaliana (Mouse-ear cress) protein is Amine oxidase [copper-containing] alpha 2, peroxisomal.